We begin with the raw amino-acid sequence, 486 residues long: Protein hold'em (486 aa).

Positions 166–285 (IITTNVNLLV…DCRLLLAFAA (120 aa)) form a DNA-binding region, OB.

Belongs to the MEIOB family. Interacts with mei-9 and Ercc1.

Single-stranded DNA-binding protein required for meiosis. May be involved in the resolution of recombination intermediates into crossovers in the meiotic recombination pathway. This Drosophila melanogaster (Fruit fly) protein is Protein hold'em (hdm).